The sequence spans 156 residues: Small ribosomal subunit protein uS7 (156 aa).

The protein belongs to the universal ribosomal protein uS7 family. Part of the 30S ribosomal subunit. Contacts proteins S9 and S11.

Functionally, one of the primary rRNA binding proteins, it binds directly to 16S rRNA where it nucleates assembly of the head domain of the 30S subunit. Is located at the subunit interface close to the decoding center, probably blocks exit of the E-site tRNA. The sequence is that of Small ribosomal subunit protein uS7 from Mycoplasmopsis pulmonis (strain UAB CTIP) (Mycoplasma pulmonis).